The sequence spans 185 residues: Ribosome-recycling factor (185 aa).

This sequence belongs to the RRF family.

The protein localises to the cytoplasm. Responsible for the release of ribosomes from messenger RNA at the termination of protein biosynthesis. May increase the efficiency of translation by recycling ribosomes from one round of translation to another. This Salinispora arenicola (strain CNS-205) protein is Ribosome-recycling factor.